Reading from the N-terminus, the 433-residue chain is Probable M18 family aminopeptidase 2 (433 aa).

Zn(2+) contacts are provided by H79, H153, and H404.

The protein belongs to the peptidase M18 family. Zn(2+) serves as cofactor.

This is Probable M18 family aminopeptidase 2 (apeB) from Mycobacterium bovis (strain ATCC BAA-935 / AF2122/97).